Reading from the N-terminus, the 247-residue chain is Ubiquinone biosynthesis O-methyltransferase (247 aa).

Residues Arg-41, Gly-72, Asp-93, and Met-136 each coordinate S-adenosyl-L-methionine.

It belongs to the methyltransferase superfamily. UbiG/COQ3 family.

It catalyses the reaction a 3-demethylubiquinol + S-adenosyl-L-methionine = a ubiquinol + S-adenosyl-L-homocysteine + H(+). The enzyme catalyses a 3-(all-trans-polyprenyl)benzene-1,2-diol + S-adenosyl-L-methionine = a 2-methoxy-6-(all-trans-polyprenyl)phenol + S-adenosyl-L-homocysteine + H(+). Its pathway is cofactor biosynthesis; ubiquinone biosynthesis. O-methyltransferase that catalyzes the 2 O-methylation steps in the ubiquinone biosynthetic pathway. The protein is Ubiquinone biosynthesis O-methyltransferase of Bartonella quintana (strain Toulouse) (Rochalimaea quintana).